Reading from the N-terminus, the 913-residue chain is Eukaryotic translation initiation factor 3 subunit C (913 aa).

Positions 1–22 are disordered; that stretch reads MSRFFANGSDSESESSEEEVQA. Over residues 11–20 the composition is skewed to acidic residues; it reads SESESSEEEV. 4 positions are modified to phosphoserine: Ser-34, Ser-165, Ser-177, and Ser-186. A disordered region spans residues 157 to 285; it reads FREAPDQESD…KRAEDDEDGE (129 aa). Residues 162 to 171 show a composition bias toward acidic residues; sequence DQESDVEEGE. Basic and acidic residues predominate over residues 172–184; sequence GEPHDSDGDRAGA. Over residues 214–239 the composition is skewed to acidic residues; the sequence is DEDDSDDSIDWDSDTESETESSEDEN. Over residues 244-263 the composition is skewed to basic and acidic residues; that stretch reads MRERFLKRTTEKEDKDDDKR. Positions 264–276 are enriched in basic residues; the sequence is KDKRKEQKHKVRK. The 177-residue stretch at 645–821 folds into the PCI domain; sequence FHMHINLELL…ETVVMHRSEP (177 aa). Residues 856-913 form a disordered region; the sequence is RGNMGNRDRGYNRNQNNQGGNWGGQRRDNRNQRNRNQRGHHKQQQQQQQQQVQTIEEE. A compositionally biased stretch (basic residues) spans 887 to 898; it reads QRNRNQRGHHKQ.

The protein belongs to the eIF-3 subunit C family. Component of the eukaryotic translation initiation factor 3 (eIF-3) complex. The eIF-3 complex interacts with pix.

Its subcellular location is the cytoplasm. Functionally, component of the eukaryotic translation initiation factor 3 (eIF-3) complex, which is involved in protein synthesis of a specialized repertoire of mRNAs and, together with other initiation factors, stimulates binding of mRNA and methionyl-tRNAi to the 40S ribosome. The eIF-3 complex specifically targets and initiates translation of a subset of mRNAs involved in cell proliferation. The sequence is that of Eukaryotic translation initiation factor 3 subunit C from Drosophila mojavensis (Fruit fly).